Consider the following 465-residue polypeptide: MTDSIMQNYNQLREQVINGDRRFQHKDGHLCFEGVDLDALARQYPTPFYVFSEPEIIRNIHEIQQAFAAHKNTKTFFASKTCSVMGVLKAIRDAGICAEANSQYEVRKCLEIGFRGDQIVFNGVVKKPADLEYAIANDLYLINVDSLYELEHIDAISRKLKKVANVCVRVEPNVPSATHAELVTAFHAKSGLDLEQAEETCRRILAMPYVHLRGLHMHVGDQVPESEPFAKATKVLVDESRRLEEVLGIKFDLINVGGGIPVPYKYDDENGDPLKDNMYAGITAQDFADAVIREVHKWRTDVEICIEPGRKVTGSAAVLLTEVSCEKRKTNYDLNGNVECHVEWKFVDAGYSVLSDSQHFDWFFYVYNASRMTAAHDAWIKLAGPLCDGGDYFHMGVKGEEFLLPKETHVGDIVAFLDAGAYTIESQTVYNNRPRTGVVMIDKNGDTRLIRREDSYEDMVKYDIY.

The residue at position 80 (K80) is an N6-(pyridoxal phosphate)lysine. Residues G259 and 307–310 each bind pyridoxal 5'-phosphate; that span reads EPGR. C387 serves as the catalytic Proton donor. Y422 provides a ligand contact to pyridoxal 5'-phosphate.

It belongs to the Orn/Lys/Arg decarboxylase class-II family. Homodimer. Requires pyridoxal 5'-phosphate as cofactor.

It catalyses the reaction D-ornithine + H(+) = putrescine + CO2. The enzyme catalyses D-lysine + H(+) = cadaverine + CO2. In terms of biological role, catalyzes the decarboxylation of D-ornithine and D-lysine. Ornithine is likely the physiological substrate. Has no detectable diaminopimelate decarboxylase activity in vitro. The polypeptide is D-ornithine/D-lysine decarboxylase (Salmonella typhimurium (strain LT2 / SGSC1412 / ATCC 700720)).